The sequence spans 434 residues: ATP-dependent protease ATPase subunit HslU (434 aa).

Residues Val18, 60–65 (GVGKTE), Asp247, Glu312, and Arg384 each bind ATP.

It belongs to the ClpX chaperone family. HslU subfamily. In terms of assembly, a double ring-shaped homohexamer of HslV is capped on each side by a ring-shaped HslU homohexamer. The assembly of the HslU/HslV complex is dependent on binding of ATP.

Its subcellular location is the cytoplasm. Its function is as follows. ATPase subunit of a proteasome-like degradation complex; this subunit has chaperone activity. The binding of ATP and its subsequent hydrolysis by HslU are essential for unfolding of protein substrates subsequently hydrolyzed by HslV. HslU recognizes the N-terminal part of its protein substrates and unfolds these before they are guided to HslV for hydrolysis. The chain is ATP-dependent protease ATPase subunit HslU from Rhodopseudomonas palustris (strain BisB18).